Reading from the N-terminus, the 90-residue chain is Alpha-latrotoxin associated low molecular weight protein (90 aa).

The first 18 residues, Met1–Ala18, serve as a signal peptide directing secretion.

It belongs to the arthropod CHH/MIH/GIH/VIH hormone family. In terms of tissue distribution, expressed by the venom gland.

The protein localises to the secreted. Functionally, may increase the toxicity of alpha-latrotoxin and/or other venom components. Is non-toxic to mice and to the cockroach Periplaneta americana. The chain is Alpha-latrotoxin associated low molecular weight protein from Latrodectus geometricus (Brown widow spider).